The following is an 812-amino-acid chain: INO80 complex subunit D (812 aa).

Disordered stretches follow at residues 521-573 (NSRK…LCMP) and 581-600 (EVSS…ELPD). The span at 524–558 (KVQHHQQRKPRKKTKPPALTKKTKKKRRRGPRRPQ) shows a compositional bias: basic residues. The segment covering 585 to 595 (IRSPSTPNLST) has biased composition (polar residues).

This sequence belongs to the INO80D family. In terms of assembly, component of the chromatin-remodeling INO80 complex.

Its subcellular location is the nucleus. Functionally, putative regulatory component of the chromatin remodeling INO80 complex which is involved in transcriptional regulation, DNA replication and probably DNA repair. The protein is INO80 complex subunit D of Xenopus laevis (African clawed frog).